The sequence spans 403 residues: Creatinase (403 aa).

His232 is a catalytic residue.

It belongs to the peptidase M24 family. Creatinase subfamily. In terms of assembly, homodimer.

The catalysed reaction is creatine + H2O = sarcosine + urea. The polypeptide is Creatinase (Pseudomonas putida (Arthrobacter siderocapsulatus)).